The chain runs to 289 residues: Cyclin-dependent kinase 2 homolog (289 aa).

Residues 4 to 285 enclose the Protein kinase domain; sequence YHGLEKIGEG…AKQAIEHPYF (282 aa). ATP-binding positions include 10–18 and Lys-32; that span reads IGEGTYGVV. Residue Thr-14 is modified to Phosphothreonine. Tyr-15 bears the Phosphotyrosine mark. Residue Asp-126 is the Proton acceptor of the active site. The residue at position 159 (Thr-159) is a Phosphothreonine.

This sequence belongs to the protein kinase superfamily. CMGC Ser/Thr protein kinase family. CDC2/CDKX subfamily. In terms of assembly, may form a complex composed of at least the catalytic subunit CRK2 and a cyclin. The cofactor is Mg(2+).

Its subcellular location is the cytoplasm. It carries out the reaction L-seryl-[protein] + ATP = O-phospho-L-seryl-[protein] + ADP + H(+). It catalyses the reaction L-threonyl-[protein] + ATP = O-phospho-L-threonyl-[protein] + ADP + H(+). The enzyme catalyses [DNA-directed RNA polymerase] + ATP = phospho-[DNA-directed RNA polymerase] + ADP + H(+). Phosphorylation at Thr-14 or Tyr-15 inactivates the enzyme, while phosphorylation at Thr-159 activates it. In terms of biological role, serine/threonine-protein kinase. Involved in the control of the cell cycle. Required for entry into S-phase and mitosis. Probable component of the kinase complex that phosphorylates the repetitive C-terminus of RNA polymerase II. The polypeptide is Cyclin-dependent kinase 2 homolog (Plasmodium yoelii yoelii).